The chain runs to 399 residues: MAETIQEVEDEYKAFCKSFSKESDDPVACIHFTAEGEVTFKSILFVPTFVPRGLFDEYGSKKSDYIKLYVRCVFITDDFRDTMPKNLNFVKGVVDSGGLSLNVSCETLQQHKLLKVIRKKLVHKTLDMIKKIADEKYNDTFWKEFGTNIKLGVIEDHSNRTCLAKLLRFQSSHHPADITSLHQDVERMKEKQDKICLMAGGYEVIYLTEPVVEYCIQALPEFDGKRFQNVAKEGVKFDDSEKTKESHEAVEKEFEPLPNWVKDKAIKDKIEKAMVSQCLTESLCALVASQYGWSGNMERIMKAQAYQTGKGISTNYHASRKKTFEINPRHPLIRDMLRRIKEDEDDKTVLDLAVVEEPDEEPEETAEDKEQDKDKEMDVGTDEEKQETAKESTAEKDEL.

A Glycyl lysine isopeptide (Lys-Gly) (interchain with G-Cter in SUMO2) cross-link involves residue Lys130. The segment at Leu350–Leu399 is disordered. The segment covering Val354–Glu367 has biased composition (acidic residues). The span at Asp368–Leu399 shows a compositional bias: basic and acidic residues.

It belongs to the heat shock protein 90 family.

Its function is as follows. Putative molecular chaperone. The protein is Putative endoplasmin-like protein (HSP90B2P) of Homo sapiens (Human).